The following is a 390-amino-acid chain: Homeobox protein Meis1 (390 aa).

Residues G108 to G192 enclose the MEIS N-terminal domain. Residues R190–T202 show a composition bias toward basic and acidic residues. The segment at R190–F279 is disordered. Polar residues predominate over residues R203–W213. Residues R272 to M334 constitute a DNA-binding region (homeobox; TALE-type). Positions Y299 to R329 are interaction with DNA. A required for transcriptional activation region spans residues I335–M390.

It belongs to the TALE/MEIS homeobox family. As to quaternary structure, interacts with the N-terminal region of PBX1 to form a heterodimer which binds DNA including a cAMP-responsive sequence in CYP17. Also forms heterodimers with PBX2. Forms heterotrimers with PBX1 or PBX2 and a number of HOX proteins including HOXA9, HOXD4 and HOXD9 where it acts as a non-DNA-binding partner. Also forms heterotrimers with PBX1 and HOX proteins including HOXD9 and HOXD10 where PBX1 is the non-DNA-binding partner. Heterodimer with DLX3. Heterodimer with HOXB13. In terms of tissue distribution, expressed at low level in normal immunohepatopoietic tissues, including the fetal liver. Expressed in a subset of myeloid leukemia cell lines, with the highest expression seen in those with a megakaryocytic-erythroid phenotype. Also expressed at high levels in the cerebellum.

Its subcellular location is the nucleus. Acts as a transcriptional regulator of PAX6. Acts as a transcriptional activator of PF4 in complex with PBX1 or PBX2. Required for hematopoiesis, megakaryocyte lineage development and vascular patterning. May function as a cofactor for HOXA7 and HOXA9 in the induction of myeloid leukemias. This is Homeobox protein Meis1 (MEIS1) from Homo sapiens (Human).